Consider the following 364-residue polypeptide: Methylthioribose-1-phosphate isomerase (364 aa).

Substrate is bound by residues Arg49–Ala51, Arg89, and Gln201. The active-site Proton donor is Asp242. Asn252–Lys253 lines the substrate pocket.

This sequence belongs to the eIF-2B alpha/beta/delta subunits family. MtnA subfamily.

It carries out the reaction 5-(methylsulfanyl)-alpha-D-ribose 1-phosphate = 5-(methylsulfanyl)-D-ribulose 1-phosphate. It participates in amino-acid biosynthesis; L-methionine biosynthesis via salvage pathway; L-methionine from S-methyl-5-thio-alpha-D-ribose 1-phosphate: step 1/6. Its function is as follows. Catalyzes the interconversion of methylthioribose-1-phosphate (MTR-1-P) into methylthioribulose-1-phosphate (MTRu-1-P). The polypeptide is Methylthioribose-1-phosphate isomerase (Leptospira interrogans serogroup Icterohaemorrhagiae serovar copenhageni (strain Fiocruz L1-130)).